The chain runs to 367 residues: Aminomethyltransferase (367 aa).

Belongs to the GcvT family. In terms of assembly, the glycine cleavage system is composed of four proteins: P, T, L and H.

It carries out the reaction N(6)-[(R)-S(8)-aminomethyldihydrolipoyl]-L-lysyl-[protein] + (6S)-5,6,7,8-tetrahydrofolate = N(6)-[(R)-dihydrolipoyl]-L-lysyl-[protein] + (6R)-5,10-methylene-5,6,7,8-tetrahydrofolate + NH4(+). Its function is as follows. The glycine cleavage system catalyzes the degradation of glycine. The protein is Aminomethyltransferase of Mycobacterium leprae (strain Br4923).